The primary structure comprises 221 residues: Probable septum site-determining protein MinC (221 aa).

Belongs to the MinC family. As to quaternary structure, interacts with MinD and FtsZ.

In terms of biological role, cell division inhibitor that blocks the formation of polar Z ring septums. Rapidly oscillates between the poles of the cell to destabilize FtsZ filaments that have formed before they mature into polar Z rings. Prevents FtsZ polymerization. The chain is Probable septum site-determining protein MinC from Aliivibrio fischeri (strain MJ11) (Vibrio fischeri).